The primary structure comprises 217 residues: Oxygen-evolving enhancer protein 3, chloroplastic (217 aa).

Disordered stretches follow at residues 1-25 (MAQAMASMTGLSQGVQLPAGPRRAG) and 73-95 (PIKLGPPPPPSGGLPGTLNSDQA). A chloroplast-targeting transit peptide spans 1 to 63 (MAQAMASMTG…ATGIAGGALA (63 aa)).

It belongs to the PsbQ family.

Its subcellular location is the plastid. The protein localises to the chloroplast thylakoid membrane. This is Oxygen-evolving enhancer protein 3, chloroplastic from Oryza sativa subsp. indica (Rice).